The primary structure comprises 204 residues: Putative F-box protein L168 (204 aa).

Residues 1–46 (MNLCDLFDEIIIGIIDELSDRDKIKFMTTCSRFYYFIDKTKYFDIY) enclose the F-box domain. The interval 161–184 (NETNKITNNHTNKKINNNKKHQNN) is disordered. Residues 171 to 183 (TNKKINNNKKHQN) show a composition bias toward basic residues.

The chain is Putative F-box protein L168 from Acanthamoeba polyphaga (Amoeba).